Consider the following 553-residue polypeptide: Membrane protein insertase YidC (553 aa).

A run of 5 helical transmembrane segments spans residues 7 to 24 (VLWV…DNWQ), 365 to 385 (WGWA…PLSA), 435 to 455 (LPVV…LASV), 474 to 494 (PYFI…SLNP), and 509 to 529 (PIAF…YYVV).

Belongs to the OXA1/ALB3/YidC family. Type 1 subfamily. In terms of assembly, interacts with the Sec translocase complex via SecD. Specifically interacts with transmembrane segments of nascent integral membrane proteins during membrane integration.

It is found in the cell inner membrane. In terms of biological role, required for the insertion and/or proper folding and/or complex formation of integral membrane proteins into the membrane. Involved in integration of membrane proteins that insert both dependently and independently of the Sec translocase complex, as well as at least some lipoproteins. Aids folding of multispanning membrane proteins. This Burkholderia multivorans (strain ATCC 17616 / 249) protein is Membrane protein insertase YidC.